The primary structure comprises 125 residues: Small ribosomal subunit protein uS12m (125 aa).

The protein belongs to the universal ribosomal protein uS12 family.

The protein localises to the mitochondrion. Its function is as follows. Protein S12 is involved in the translation initiation step. The polypeptide is Small ribosomal subunit protein uS12m (RPS12) (Brassica napus (Rape)).